We begin with the raw amino-acid sequence, 350 residues long: Arginine/serine-rich coiled-coil protein 2 (350 aa).

Disordered stretches follow at residues 1–146 and 328–350; these read MIRT…FRGR and SQTH…MDAV. Residues 10–24 show a composition bias toward basic residues; it reads QARRHEVKAKSSKKH. Residues 25 to 51 show a composition bias toward basic and acidic residues; the sequence is RSDDTVDRDHSDKIRDRLNSSENGDEK. Basic residues predominate over residues 52-132; sequence HRRKEKRSSR…IEKPRRHSRS (81 aa). Residues 146–187 adopt a coiled-coil conformation; the sequence is RNAAMDAQEALARRLERAKKLQEQREKESAEKQQEIAAVAAA.

It belongs to the RSRC2 family.

The chain is Arginine/serine-rich coiled-coil protein 2 (rsrc2) from Xenopus laevis (African clawed frog).